Here is a 217-residue protein sequence, read N- to C-terminus: Chaperone protein TorD (217 aa).

Belongs to the TorD/DmsD family. TorD subfamily.

It is found in the cytoplasm. Functionally, involved in the biogenesis of TorA. Acts on TorA before the insertion of the molybdenum cofactor and, as a result, probably favors a conformation of the apoenzyme that is competent for acquiring the cofactor. The protein is Chaperone protein TorD of Shewanella oneidensis (strain ATCC 700550 / JCM 31522 / CIP 106686 / LMG 19005 / NCIMB 14063 / MR-1).